The chain runs to 209 residues: Uracil phosphoribosyltransferase (209 aa).

Residues arginine 79, arginine 104, and aspartate 131 to serine 139 contribute to the 5-phospho-alpha-D-ribose 1-diphosphate site. Residues isoleucine 194 and glycine 199–alanine 201 each bind uracil. Aspartate 200 is a binding site for 5-phospho-alpha-D-ribose 1-diphosphate.

This sequence belongs to the UPRTase family. The cofactor is Mg(2+).

The catalysed reaction is UMP + diphosphate = 5-phospho-alpha-D-ribose 1-diphosphate + uracil. The protein operates within pyrimidine metabolism; UMP biosynthesis via salvage pathway; UMP from uracil: step 1/1. With respect to regulation, allosterically activated by GTP. Functionally, catalyzes the conversion of uracil and 5-phospho-alpha-D-ribose 1-diphosphate (PRPP) to UMP and diphosphate. The polypeptide is Uracil phosphoribosyltransferase (Rhizobium etli (strain CIAT 652)).